Here is a 267-residue protein sequence, read N- to C-terminus: Ras-related protein Rab-36 (267 aa).

Val68, Gly69, Lys70, Thr71, Ser72, Asp83, Tyr86, and Thr89 together coordinate GTP. Thr71 serves as a coordination point for Mg(2+). Positions 76–94 (RLCKNVFDHDYKATIGVDF) match the Switch 1 motif. Mg(2+) is bound by residues Thr89 and Asp112. A Switch 2 motif is present at residues 113-132 (TAGQEKFKCIASAYYRGAQV). GTP-binding residues include Gly115, Lys172, Asp174, Ser203, Ala204, and Lys205. Residues Cys266 and Cys267 are each lipidated (S-geranylgeranyl cysteine).

Belongs to the small GTPase superfamily. Rab family. Mg(2+) serves as cofactor.

The protein localises to the golgi apparatus membrane. It catalyses the reaction GTP + H2O = GDP + phosphate + H(+). Its activity is regulated as follows. Regulated by guanine nucleotide exchange factors (GEFs) which promote the exchange of bound GDP for free GTP. Regulated by GTPase activating proteins (GAPs) which increase the GTP hydrolysis activity. Inhibited by GDP dissociation inhibitors (GDIs). Its function is as follows. The small GTPases Rab are key regulators of intracellular membrane trafficking, from the formation of transport vesicles to their fusion with membranes. Rabs cycle between an inactive GDP-bound form and an active GTP-bound form that is able to recruit to membranes different sets of downstream effectors directly responsible for vesicle formation, movement, tethering and fusion. This is Ras-related protein Rab-36 from Mus musculus (Mouse).